The following is a 954-amino-acid chain: Glycine dehydrogenase (decarboxylating) (954 aa).

The residue at position 704 (K704) is an N6-(pyridoxal phosphate)lysine.

The protein belongs to the GcvP family. As to quaternary structure, the glycine cleavage system is composed of four proteins: P, T, L and H. Pyridoxal 5'-phosphate is required as a cofactor.

The enzyme catalyses N(6)-[(R)-lipoyl]-L-lysyl-[glycine-cleavage complex H protein] + glycine + H(+) = N(6)-[(R)-S(8)-aminomethyldihydrolipoyl]-L-lysyl-[glycine-cleavage complex H protein] + CO2. In terms of biological role, the glycine cleavage system catalyzes the degradation of glycine. The P protein binds the alpha-amino group of glycine through its pyridoxal phosphate cofactor; CO(2) is released and the remaining methylamine moiety is then transferred to the lipoamide cofactor of the H protein. This Allorhizobium ampelinum (strain ATCC BAA-846 / DSM 112012 / S4) (Agrobacterium vitis (strain S4)) protein is Glycine dehydrogenase (decarboxylating).